The primary structure comprises 596 residues: MRGLNNIAVALALSAIWSFGLDLGRHGTSGSSLLLALFRTLCKAYPFVVISHFVWSAIIWPTFFSPLRQLPNVPSDGWLSKETLRLVSEPRGVPQSDWINSLSNRPVDLARYRSFLGFERLLIISPKALAEVLTTKSYDFRKPGLIVSELKQATGMGVLLAEGSEHKSQRKALQTAFNYRHIKNLYPVFWDVAGEFATVLEKQIPTGTPRTSDTTAVIDIVDWASRATLDIIGRAGMGQGFDAIQNDDSRLHQAYRMIFEPSRGAIFLALLRLIFPERLVNWLPLRRNKRMRHGIQVIRSKCQELIRERKEKIKRQKAGVDNSGNDILTVALLNGVFTDEQLIDQLMTFLAAGHETTATALTWAIYILCKQPEVQNRLREEIRMHFPNPKGWPRSERPSSNTLQQAIDFKLPYLNVVCLEVMRYFAPIPLTMREATCDTTILHTFVPAGTRIILAPRVTNRDSALWGPDANNFNPDRWLSPKNGNREATEQSKFKIGNQKRDSTAAPEVTQEEVRGRTEARSNYADLTFLHGPRSCIGQSFARVEFAILLATLIANFEFQIEDESLLDERNISISRGATSRIVGGLKVRVRPIAVV.

The interval 476–512 (DRWLSPKNGNREATEQSKFKIGNQKRDSTAAPEVTQE) is disordered. Residues 484–503 (GNREATEQSKFKIGNQKRDS) show a composition bias toward basic and acidic residues. Residue Cys-536 coordinates heme.

It belongs to the cytochrome P450 family. The cofactor is heme.

Its subcellular location is the endoplasmic reticulum. It participates in secondary metabolite biosynthesis. Cytochrome P450 monooxygenase; part of the gene cluster that mediates the biosynthesis of fumonisins B1 (FB1), B2 (FB2), B3 (FB3), and B4 (FB4), which are carcinogenic mycotoxins. Within the pathway, FUM15 may be responsible for the hydroxylations at positions C-14 and/or C-15. Also plays a role in self-protection from FB1 toxicity, probably through derivatization of FB1, and may contribute to ceramide biosynthesis. The biosynthesis starts with the FUM1-catalyzed carbon chain assembly from one molecule of acetyl-CoA, eight molecules of malonyl-CoA, and two molecules of methionine (in S-adenosyl form). The C18 polyketide chain is released from the enzyme by a nucleophilic attack of a carbanion, which is derived from R-carbon of alanine by decarboxylation, on the carbonyl carbon of polyketide acyl chain. This step is catalyzed by the pyridoxal 5'-phosphate-dependent aminoacyl transferase FUM8. The resultant 3-keto intermediate is then stereospecifically reduced to a 3-hydroxyl product by reductase FUM13. Subsequent oxidations at C-10 by the cytochrome P450 monooxygenase FUM2, C-14 and C-15 by FUM6, FUM12 or FUM15, tricarballylic esterification of the hydroxyl groups on C-14 and C-15 by acyltransferase FUM14, and C-5 hydroxylation by 2-keto-glutarate-dependent dioxygenase FUM3 furnish the biosynthesis of fumonisins. The tricarballylic moieties are most likely derived from the citric acid cycle, and their addition to the carbon backbone may involve FUM7, FUM10, FUM11 and FUM14. The polypeptide is Cytochrome P450 monooxygenase FUM15 (Gibberella moniliformis (strain M3125 / FGSC 7600) (Maize ear and stalk rot fungus)).